We begin with the raw amino-acid sequence, 177 residues long: Large ribosomal subunit protein uL6 (177 aa).

The protein belongs to the universal ribosomal protein uL6 family. In terms of assembly, part of the 50S ribosomal subunit.

This protein binds to the 23S rRNA, and is important in its secondary structure. It is located near the subunit interface in the base of the L7/L12 stalk, and near the tRNA binding site of the peptidyltransferase center. This Bradyrhizobium diazoefficiens (strain JCM 10833 / BCRC 13528 / IAM 13628 / NBRC 14792 / USDA 110) protein is Large ribosomal subunit protein uL6.